The chain runs to 214 residues: Putative AgrB-like protein (214 aa).

5 helical membrane passes run 41-61 (IISV…LIFL), 82-102 (CTLL…SSFF), 109-129 (IIVF…FKFA), 154-174 (ILTI…NLGW), and 182-202 (LSII…GNIL).

This sequence belongs to the AgrB family.

It is found in the cell membrane. Its function is as follows. May be involved in the proteolytic processing of a quorum sensing system signal molecule precursor. This chain is Putative AgrB-like protein, found in Clostridium perfringens (strain SM101 / Type A).